A 548-amino-acid chain; its full sequence is Probable thiamine biosynthetic bifunctional enzyme, chloroplastic (548 aa).

Polar residues predominate over residues 1 to 10 (MAAAPQQSVH). Positions 1 to 40 (MAAAPQQSVHPSLPSSTSTLRLLISSSPRRPPPPPPRARR) are disordered. A chloroplast-targeting transit peptide spans 1–47 (MAAAPQQSVHPSLPSSTSTLRLLISSSPRRPPPPPPRARRYNRLAAS). Positions 11-28 (PSLPSSTSTLRLLISSSP) are enriched in low complexity. Residues 372–376 (QLREK) and N404 contribute to the 4-amino-2-methyl-5-(diphosphooxymethyl)pyrimidine site. 2 residues coordinate Mg(2+): D405 and D424. S443 is a 4-amino-2-methyl-5-(diphosphooxymethyl)pyrimidine binding site. A 2-[(2R,5Z)-2-carboxy-4-methylthiazol-5(2H)-ylidene]ethyl phosphate-binding site is contributed by 469-471 (TST). Residue K472 coordinates 4-amino-2-methyl-5-(diphosphooxymethyl)pyrimidine. Residues G499 and 522–523 (VS) each bind 2-[(2R,5Z)-2-carboxy-4-methylthiazol-5(2H)-ylidene]ethyl phosphate.

It belongs to the thiamine-phosphate synthase family. Mg(2+) is required as a cofactor.

It is found in the plastid. The protein resides in the chloroplast. The catalysed reaction is 2-[(2R,5Z)-2-carboxy-4-methylthiazol-5(2H)-ylidene]ethyl phosphate + 4-amino-2-methyl-5-(diphosphooxymethyl)pyrimidine + 2 H(+) = thiamine phosphate + CO2 + diphosphate. The enzyme catalyses 2-(2-carboxy-4-methylthiazol-5-yl)ethyl phosphate + 4-amino-2-methyl-5-(diphosphooxymethyl)pyrimidine + 2 H(+) = thiamine phosphate + CO2 + diphosphate. It catalyses the reaction 4-methyl-5-(2-phosphooxyethyl)-thiazole + 4-amino-2-methyl-5-(diphosphooxymethyl)pyrimidine + H(+) = thiamine phosphate + diphosphate. It carries out the reaction 4-amino-5-hydroxymethyl-2-methylpyrimidine + ATP = 4-amino-2-methyl-5-(phosphooxymethyl)pyrimidine + ADP + H(+). It participates in cofactor biosynthesis; thiamine diphosphate biosynthesis; thiamine phosphate from 4-amino-2-methyl-5-diphosphomethylpyrimidine and 4-methyl-5-(2-phosphoethyl)-thiazole: step 1/1. Its pathway is cofactor biosynthesis; thiamine diphosphate biosynthesis; 4-amino-2-methyl-5-diphosphomethylpyrimidine from 5-amino-1-(5-phospho-D-ribosyl)imidazole: step 2/3. Its function is as follows. Essential for thiamine biosynthesis. Bifunctional enzyme that catalyzes the phosphorylation of hydroxymethylpyrimidine phosphate (HMP-P) to HMP-PP and condenses 4-methyl-5-(beta-hydroxyethyl)thiazole monophosphate (THZ-P) and 2-methyl-4-amino-5-hydroxymethyl pyrimidine pyrophosphate (HMP-PP) to form thiamine monophosphate (TMP). In Oryza sativa subsp. japonica (Rice), this protein is Probable thiamine biosynthetic bifunctional enzyme, chloroplastic.